A 220-amino-acid chain; its full sequence is 2-dehydro-3-deoxy-phosphogluconate aldolase (220 aa).

E48 (proton acceptor) is an active-site residue. 3 residues coordinate pyruvate: R52, T76, and K136. K136 functions as the Schiff-base intermediate with substrate in the catalytic mechanism.

The protein belongs to the KHG/KDPG aldolase family. As to quaternary structure, homotrimer.

The catalysed reaction is 2-dehydro-3-deoxy-6-phospho-D-gluconate = D-glyceraldehyde 3-phosphate + pyruvate. Its pathway is carbohydrate acid metabolism; 2-dehydro-3-deoxy-D-gluconate degradation; D-glyceraldehyde 3-phosphate and pyruvate from 2-dehydro-3-deoxy-D-gluconate: step 2/2. Functionally, involved in the degradation of glucose via the Entner-Doudoroff pathway. Catalyzes the reversible, stereospecific retro-aldol cleavage of 2-keto-3-deoxy-6-phosphogluconate (KDPG) to pyruvate and D-glyceraldehyde-3-phosphate. In Pseudomonas aeruginosa (strain ATCC 15692 / DSM 22644 / CIP 104116 / JCM 14847 / LMG 12228 / 1C / PRS 101 / PAO1), this protein is 2-dehydro-3-deoxy-phosphogluconate aldolase (eda).